Reading from the N-terminus, the 638-residue chain is Chaperone protein HtpG (638 aa).

Residues 1-343 (MTSTIDSDGA…SADLPLNISR (343 aa)) are a; substrate-binding. Positions 344–557 (EMIQESPILA…ESGPDRQLEK (214 aa)) are b. The interval 558 to 638 (ILVGVGQLTG…VERGLRGSTA (81 aa)) is c.

It belongs to the heat shock protein 90 family. As to quaternary structure, homodimer.

It localises to the cytoplasm. Its function is as follows. Molecular chaperone. Has ATPase activity. In Nitrobacter hamburgensis (strain DSM 10229 / NCIMB 13809 / X14), this protein is Chaperone protein HtpG.